Consider the following 435-residue polypeptide: Mitogen-activated protein kinase HOG1 (435 aa).

The residue at position 2 (T2) is an N-acetylthreonine. The 280-residue stretch at 23–302 (YNDLNPVGMG…AADALAHPYS (280 aa)) folds into the Protein kinase domain. ATP contacts are provided by residues 29–37 (VGMGAFGLV) and K52. D144 (proton acceptor) is an active-site residue. 2 residues coordinate arsenite: C156 and C161. A Phosphothreonine; by PBS2 modification is found at T174. A TXY motif is present at residues 174 to 176 (TGY). Position 176 is a phosphotyrosine; by PBS2 (Y176). Arsenite is bound at residue C205.

This sequence belongs to the protein kinase superfamily. Ser/Thr protein kinase family. MAP kinase subfamily. HOG1 sub-subfamily. Interacts with CDC37, HOT1, KIN28, PTP2, PTP3, RBP1, RCK2, RPD3, SIC1, SMP1 and SIN4. Mg(2+) serves as cofactor. In terms of processing, activated by PBS2-mediated concomitant phosphorylation at Thr-174 and Tyr-176. Dually phosphorylated on Thr-174 and Tyr-176, which activates the enzyme.

Its subcellular location is the cytoplasm. It localises to the nucleus. It catalyses the reaction L-seryl-[protein] + ATP = O-phospho-L-seryl-[protein] + ADP + H(+). The catalysed reaction is L-threonyl-[protein] + ATP = O-phospho-L-threonyl-[protein] + ADP + H(+). With respect to regulation, activated by tyrosine and threonine phosphorylation. Inactivated by dephosphorylation via recruitment of PTC1 to the PBS2-HOG1 complex after adaptation to osmotic stress. PTP2 and PTP3 inactivate HOG1 by dephosphorylating Tyr-176, while the PP2Cs PTC1 and PTC2 or PTC3 dephosphorylate Thr-174 in the activation loop. Its function is as follows. Proline-directed serine/threonine-protein kinase involved in a signal transduction pathway that is activated by changes in the osmolarity of the extracellular environment. Controls osmotic regulation of transcription via the stress response element (STRE) in promoters of target genes. Upon osmotic shock, associates with the SKO1-SSN6-TUP1 complex, phosphorylates SKO1, and converts it into an activator that subsequently recruits Swi/Snf and SAGA complexes. Activates the SMP1 transcription factor and the RCK2 kinase, both also involved in the regulation of the expression of a subset of osmotic stress-related genes. Phosphorylation of HSL1 by HOG1 leads to a G2 arrest essential for cell survival at high osmolarity. Also mediates cell-cycle arrest in G1 phase by the dual targeting of SIC1. Phosphorylates methyltransferase DOT1 at least on 'Ser-565' and 'Thr-576'. Regulates MFA2 ARE-mediated translation in response to carbon source. Targets RPD3 histone deacetylase to osmoresponsive promoters to induce gene expression on stress. Required for the Golgi apparatus localization of MNN1. Plays an essential role in maintaining water homeostasis, arsenite detoxification, copper-resistance, cold-resistance, hydrogen peroxide response, adaptation to citric acid stress, and repression of the mating pathway activity. Functions as an arsenic sensor and effector via direct binding to arsenic and subsequent phosphorylation of the ARR1 transcription factor. This is Mitogen-activated protein kinase HOG1 (HOG1) from Saccharomyces cerevisiae (strain ATCC 204508 / S288c) (Baker's yeast).